A 388-amino-acid chain; its full sequence is Chorismate synthase (388 aa).

NADP(+) is bound by residues R39 and R45. Residues 130–132 (RSS), 251–252 (NA), G296, 311–315 (KPIPT), and R337 each bind FMN.

The protein belongs to the chorismate synthase family. As to quaternary structure, homotetramer. FMNH2 is required as a cofactor.

The catalysed reaction is 5-O-(1-carboxyvinyl)-3-phosphoshikimate = chorismate + phosphate. The protein operates within metabolic intermediate biosynthesis; chorismate biosynthesis; chorismate from D-erythrose 4-phosphate and phosphoenolpyruvate: step 7/7. Its function is as follows. Catalyzes the anti-1,4-elimination of the C-3 phosphate and the C-6 proR hydrogen from 5-enolpyruvylshikimate-3-phosphate (EPSP) to yield chorismate, which is the branch point compound that serves as the starting substrate for the three terminal pathways of aromatic amino acid biosynthesis. This reaction introduces a second double bond into the aromatic ring system. This Lactococcus lactis subsp. lactis (strain IL1403) (Streptococcus lactis) protein is Chorismate synthase.